The chain runs to 404 residues: Floricaula/leafy-like protein FL1 (404 aa).

The segment at 210 to 251 is disordered; the sequence is IGVPEHSSESDERKADTNKQKRRRSKEPGEDGEDRPREHPFI. 2 stretches are compositionally biased toward basic and acidic residues: residues 215–228 and 235–249; these read HSSE…DTNK and KEPG…REHP. DNA-binding regions lie at residues 246 to 250, 315 to 322, and 386 to 389; these read REHPF, NKPKMRHY, and YVPT.

The protein belongs to the FLO/LFY family. Expressed in both male and female cones, vegetative buds and needles, but not in the roots.

The protein resides in the nucleus. Its function is as follows. Probable transcription factor. The polypeptide is Floricaula/leafy-like protein FL1 (Pinus radiata (Monterey pine)).